Consider the following 20-residue polypeptide: Unknown protein NF040 from 2D-PAGE (20 aa).

The 20-residue stretch at 1-20 (MKVYTDIFTRDEFLSDSYPM) folds into the TCTP domain.

It belongs to the TCTP family.

The polypeptide is Unknown protein NF040 from 2D-PAGE (Naegleria fowleri (Brain eating amoeba)).